The sequence spans 439 residues: Xylose isomerase (439 aa).

Catalysis depends on residues His101 and Asp104. Residues Glu232, Glu268, His271, Asp296, Asp307, Asp309, and Asp339 each coordinate Mg(2+).

Belongs to the xylose isomerase family. Homotetramer. Mg(2+) is required as a cofactor.

It localises to the cytoplasm. The enzyme catalyses alpha-D-xylose = alpha-D-xylulofuranose. The chain is Xylose isomerase (xylA) from Lactococcus lactis subsp. lactis (strain IL1403) (Streptococcus lactis).